The chain runs to 357 residues: Uroporphyrinogen decarboxylase (357 aa).

Substrate contacts are provided by residues 27–31 (RQAGR), D77, Y154, T209, and H327.

This sequence belongs to the uroporphyrinogen decarboxylase family. As to quaternary structure, homodimer.

It is found in the cytoplasm. It carries out the reaction uroporphyrinogen III + 4 H(+) = coproporphyrinogen III + 4 CO2. The protein operates within porphyrin-containing compound metabolism; protoporphyrin-IX biosynthesis; coproporphyrinogen-III from 5-aminolevulinate: step 4/4. Catalyzes the decarboxylation of four acetate groups of uroporphyrinogen-III to yield coproporphyrinogen-III. The polypeptide is Uroporphyrinogen decarboxylase (Proteus mirabilis (strain HI4320)).